A 378-amino-acid polypeptide reads, in one-letter code: tRNA (guanine(26)-N(2))-dimethyltransferase (378 aa).

The Trm1 methyltransferase domain occupies 4 to 374; sequence KEVTEGKVRI…KGYEEIIRCV (371 aa). S-adenosyl-L-methionine-binding residues include R44, R69, D87, D114, and A115. Zn(2+)-binding residues include C246, C249, C263, and C266.

The protein belongs to the class I-like SAM-binding methyltransferase superfamily. Trm1 family.

The catalysed reaction is guanosine(26) in tRNA + 2 S-adenosyl-L-methionine = N(2)-dimethylguanosine(26) in tRNA + 2 S-adenosyl-L-homocysteine + 2 H(+). In terms of biological role, dimethylates a single guanine residue at position 26 of a number of tRNAs using S-adenosyl-L-methionine as donor of the methyl groups. This Saccharolobus islandicus (strain L.S.2.15 / Lassen #1) (Sulfolobus islandicus) protein is tRNA (guanine(26)-N(2))-dimethyltransferase.